A 388-amino-acid chain; its full sequence is Succinate--CoA ligase [ADP-forming] subunit beta (388 aa).

An ATP-grasp domain is found at 9 to 244; the sequence is KEILRKFGVA…LDEEDPAEIE (236 aa). Residues lysine 46, 53–55, glutamate 99, alanine 102, and glutamate 107 each bind ATP; that span reads GRG. 2 residues coordinate Mg(2+): asparagine 199 and aspartate 213. Substrate is bound by residues asparagine 264 and 321–323; that span reads GIM.

The protein belongs to the succinate/malate CoA ligase beta subunit family. As to quaternary structure, heterotetramer of two alpha and two beta subunits. Mg(2+) serves as cofactor.

The catalysed reaction is succinate + ATP + CoA = succinyl-CoA + ADP + phosphate. It carries out the reaction GTP + succinate + CoA = succinyl-CoA + GDP + phosphate. Its pathway is carbohydrate metabolism; tricarboxylic acid cycle; succinate from succinyl-CoA (ligase route): step 1/1. Succinyl-CoA synthetase functions in the citric acid cycle (TCA), coupling the hydrolysis of succinyl-CoA to the synthesis of either ATP or GTP and thus represents the only step of substrate-level phosphorylation in the TCA. The beta subunit provides nucleotide specificity of the enzyme and binds the substrate succinate, while the binding sites for coenzyme A and phosphate are found in the alpha subunit. This chain is Succinate--CoA ligase [ADP-forming] subunit beta, found in Burkholderia cenocepacia (strain HI2424).